A 294-amino-acid polypeptide reads, in one-letter code: Lipoyl synthase (294 aa).

The [4Fe-4S] cluster site is built by cysteine 38, cysteine 43, cysteine 49, cysteine 64, cysteine 68, cysteine 71, and serine 277. In terms of domain architecture, Radical SAM core spans 50 to 266 (WSRGTATFLL…RSFAEGAGFR (217 aa)).

Belongs to the radical SAM superfamily. Lipoyl synthase family. The cofactor is [4Fe-4S] cluster.

The protein localises to the cytoplasm. The catalysed reaction is [[Fe-S] cluster scaffold protein carrying a second [4Fe-4S](2+) cluster] + N(6)-octanoyl-L-lysyl-[protein] + 2 oxidized [2Fe-2S]-[ferredoxin] + 2 S-adenosyl-L-methionine + 4 H(+) = [[Fe-S] cluster scaffold protein] + N(6)-[(R)-dihydrolipoyl]-L-lysyl-[protein] + 4 Fe(3+) + 2 hydrogen sulfide + 2 5'-deoxyadenosine + 2 L-methionine + 2 reduced [2Fe-2S]-[ferredoxin]. Its pathway is protein modification; protein lipoylation via endogenous pathway; protein N(6)-(lipoyl)lysine from octanoyl-[acyl-carrier-protein]: step 2/2. Its function is as follows. Catalyzes the radical-mediated insertion of two sulfur atoms into the C-6 and C-8 positions of the octanoyl moiety bound to the lipoyl domains of lipoate-dependent enzymes, thereby converting the octanoylated domains into lipoylated derivatives. The polypeptide is Lipoyl synthase (Pelodictyon phaeoclathratiforme (strain DSM 5477 / BU-1)).